The sequence spans 116 residues: U30-theraphotoxin-Cg1b (116 aa).

An N-terminal signal peptide occupies residues 1–17 (MKLCVLTIATLLVTATS). A propeptide spanning residues 18–53 (LETQKEIAEGNELTREETPSLVEHKEDEAAAASEKR) is cleaved from the precursor. Residues 25–45 (AEGNELTREETPSLVEHKEDE) form a disordered region. Disulfide bonds link cysteine 55/cysteine 69, cysteine 62/cysteine 75, cysteine 66/cysteine 112, and cysteine 68/cysteine 88.

The protein belongs to the neurotoxin 03 (Tx2) family. 02 subfamily. In terms of tissue distribution, expressed by the venom gland.

Its subcellular location is the secreted. In terms of biological role, probable ion channel inhibitor. This is U30-theraphotoxin-Cg1b from Chilobrachys guangxiensis (Chinese earth tiger tarantula).